The following is a 266-amino-acid chain: Oxygen-evolving enhancer protein 2-3, chloroplastic (266 aa).

The N-terminal 80 residues, 1–80, are a transit peptide targeting the chloroplast; the sequence is MASTQCFLHH…VGSKVSPADA (80 aa).

Belongs to the PsbP family.

The protein resides in the plastid. It is found in the chloroplast thylakoid membrane. In terms of biological role, may be involved in the regulation of photosystem II. This Nicotiana tabacum (Common tobacco) protein is Oxygen-evolving enhancer protein 2-3, chloroplastic (PSBP3).